Here is a 489-residue protein sequence, read N- to C-terminus: Zinc finger protein 58 (489 aa).

In terms of domain architecture, KRAB spans 2–73; the sequence is LSFWDVAIDF…KRQAAAAVHP (72 aa). The segment at 78 to 100 adopts a C2H2-type 1; degenerate zinc-finger fold; the sequence is NKCKDFSKAFFCKSLLTQHQRIR. C2H2-type zinc fingers lie at residues 106-128, 134-156, 162-184, 190-212, 218-240, 246-268, 274-296, 302-324, 330-352, 358-380, 386-408, 410-432, 438-460, and 466-488; these read FKCEECGKAFNNRSNLSEHKRIH, YKCEECGKAFRIRSKLSTHQRVH, YKCEECGKAFNSHSNLSEHKRIH, YKCEECGKAFSTRSTYYRHQKNH, YKCEECAKEFSYPSLLKVHQRIH, YKCEECGKPFYCPLLLKKHQIIH, YKCAECGKAFHYPSLLKRHQRIH, CKCKDCDRAFYSSAFLKRHQRIH, YKCGECGKRFCSFPHLQYHQRFH, YKCEQCGKTFSTLSYLPWHKLRH, YKCEKCGKMFYSTLDLKKHQKIH, YKCGECHYGFPNYAALTAHQRVH, HVCEQCGKDFSRIDSLNQHQLVH, and YKCEKCGKCFYRSSSLKRHQGIH.

This sequence belongs to the krueppel C2H2-type zinc-finger protein family. As to expression, expressed in liver, testis and, at considerably lower levels, in brain, spleen and heart.

The protein localises to the nucleus. Its function is as follows. May have a role during differentiation processes. The chain is Zinc finger protein 58 (Zfp58) from Mus musculus (Mouse).